The chain runs to 113 residues: Meiotically up-regulated gene 98 protein, mitochondrial (113 aa).

The protein resides in the mitochondrion. Has a role in meiosis. The sequence is that of Meiotically up-regulated gene 98 protein, mitochondrial (mug98) from Schizosaccharomyces pombe (strain 972 / ATCC 24843) (Fission yeast).